Here is a 413-residue protein sequence, read N- to C-terminus: Eukaryotic initiation factor 4A-14 (413 aa).

Positions 40–68 (DSFDAMGLQENLLRGIYAYGFEKPSAIQQ) match the Q motif motif. Positions 71-241 (IVPFCKGLDV…RKFMSKPVRI (171 aa)) constitute a Helicase ATP-binding domain. 84 to 91 (AQSGTGKT) provides a ligand contact to ATP. Residues 189–192 (DEAD) carry the DEAD box motif. Residues 252 to 413 (GIKQFYVNVD…ELPANVADLL (162 aa)) enclose the Helicase C-terminal domain.

The protein belongs to the DEAD box helicase family. eIF4A subfamily. In terms of assembly, eIF4F is a multi-subunit complex, the composition of which varies with external and internal environmental conditions. It is composed of at least EIF4A, EIF4E and EIF4G.

The catalysed reaction is ATP + H2O = ADP + phosphate + H(+). Its function is as follows. ATP-dependent RNA helicase which is a subunit of the eIF4F complex involved in cap recognition and is required for mRNA binding to ribosome. In the current model of translation initiation, eIF4A unwinds RNA secondary structures in the 5'-UTR of mRNAs which is necessary to allow efficient binding of the small ribosomal subunit, and subsequent scanning for the initiator codon. The chain is Eukaryotic initiation factor 4A-14 from Nicotiana tabacum (Common tobacco).